The sequence spans 93 residues: M-zodatoxin-Lt5a (93 aa).

Positions 1 to 22 are cleaved as a signal peptide; that stretch reads MKYCVVILALLVALVCITESRS. Residues 23–64 constitute a propeptide that is removed on maturation; that stretch reads TETGYAVAETLEDNDLDELQAYLEEIAEASEMEDFSNIEEAR. The Processing quadruplet motif signature appears at 61–64; it reads EEAR. The residue at position 92 (Leu92) is a Leucine amide.

In terms of processing, cleavage of the propeptide depends on the processing quadruplet motif (XXXR, with at least one of X being E). Expressed by the venom gland.

The protein localises to the secreted. Has antimicrobial activity against. Gram-positive bacteria (A.globiformis VKM Ac-1112 (MIC=1.1 uM), and B.subtilis VKM B-501 (MIC=0.6 uM)), Gram-negative bacteria (E.coli DH5-alpha (MIC=0.6 uM), E.coli MH1 (MIC=0.6 uM), and P.aeruginosa PAO1 (MIC=18 uM)), and yeasts (P.pastoris GS115 (MIC&gt;37 uM), and S.cerevisiae Y190 (MIC&gt;37 uM)). Also has a moderate hemolytic activity against rabbit erythrocytes. Causes paralysis, but is not lethal when injected into insect (M.domestica) larvae. The polypeptide is M-zodatoxin-Lt5a (Lachesana tarabaevi (Spider)).